A 116-amino-acid polypeptide reads, in one-letter code: Non-specific lipid-transfer protein (116 aa).

The signal sequence occupies residues 1–25; sequence MAKMAMMVLCAGVTCMVVGAPYTEA. Intrachain disulfides connect Cys-28-Cys-75, Cys-38-Cys-52, Cys-53-Cys-98, and Cys-73-Cys-112.

This sequence belongs to the plant LTP family.

Plant non-specific lipid-transfer proteins transfer phospholipids as well as galactolipids across membranes. May play a role in wax or cutin deposition in the cell walls of expanding epidermal cells and certain secretory tissues. This is Non-specific lipid-transfer protein from Helianthus annuus (Common sunflower).